Here is a 616-residue protein sequence, read N- to C-terminus: MALLQISEPGLSAAPHQRRLAVGIDLGTTHSLVATVRSGQAETLMDSEERYLLPSVVRYHEKGPEIGWLARQQAAYDPANTISSVKRMMGRSLADIQQRYPNLPYQFQASENGLPLINTATGLVDPIQVSSDILKSLVQRAEETLDGKLDGVVITVPAYFDDAQRQGTKDAARLAGLHVLRLLNEPTAAAIAYGLDSGQEGVIAVYDLGGGTFDVSILRLSRGVFEVLATGGDTALGGDDFDLILADWIREQAGIGSRDDHSLQRQLLDMATQVKIALSDADIAEINIAGWQGKITRCEFEALITPLIKRTLLASRRALKDAEVSADEVLQVVMVGGSTRVPLVRHRVGEFFGREPLTSIDPDKVVAVGASIQADILVGNKPDSDMLLLDVIPLSLGLETMGGLVEKIIPRNTTIPVAKAQEFTTFKDGQSAMSIHVVQGERELVSDCRSLARFTLRGIPPLPAGGAHIRVTFQVDADGLLNVSALEKSTGVEAFIQVKPSYGLSDEEIARMIKDSMANAQEDINARQLAEQKVEAARVLESVTSALEKDADLLNEQEQAAIDAAVETLITSVQGNDPEIIENAIKQLDKQTQEFAARRMDSSIRRALAGHSVDEI.

It belongs to the heat shock protein 70 family.

Chaperone involved in the maturation of iron-sulfur cluster-containing proteins. Has a low intrinsic ATPase activity which is markedly stimulated by HscB. Involved in the maturation of IscU. The polypeptide is Chaperone protein HscA (Photorhabdus laumondii subsp. laumondii (strain DSM 15139 / CIP 105565 / TT01) (Photorhabdus luminescens subsp. laumondii)).